The primary structure comprises 186 residues: UPF0669 protein C6orf120 homolog (186 aa).

Residues 1–19 form the signal peptide; that stretch reads MVPFWAGLLVLSALPQTLG. N-linked (GlcNAc...) asparagine glycosylation is present at Asn47. The disordered stretch occupies residues 141-165; sequence KNSYSSDETPGQPRQSQGPEDTEEE. Over residues 142–159 the composition is skewed to polar residues; the sequence is NSYSSDETPGQPRQSQGP.

The protein belongs to the UPF0669 family.

It localises to the secreted. This Danio rerio (Zebrafish) protein is UPF0669 protein C6orf120 homolog.